We begin with the raw amino-acid sequence, 509 residues long: Cytochrome P450 monooxygenase FUP2 (509 aa).

2 helical membrane-spanning segments follow: residues 16–36 (FGLALVISALALVSVIIYGCF) and 224–244 (MVEALSFFLTLPGIASVFGIA). Cys450 contacts heme.

Belongs to the cytochrome P450 family. Requires heme as cofactor.

The protein localises to the membrane. It participates in secondary metabolite biosynthesis. In terms of biological role, cytochrome P450 monooxygenase; part of the gene cluster that mediates the biosynthesis of the mycotoxin fusaproliferin (FUP) that belongs to the class of bicyclic sesterterpenoids. FUP2 introduces a hydroxyl group at the C-24 position resulting in the formation of preterpestacin IIa, which can be further oxidized. The oxidation of the hydroxyl group at C-24 to an aldehyde and further to a carboxylic group takes place via unspecific alcohol and aldehyde dehydrogenases and leads to the shunt products preterpestacin IIc and preterpestacin IIb, respectively. The FUP biosynthetic pathway starts with the enzyme encoded by FUP1 that combines a C-terminal prenyltransferase domain responsible for the synthesis of geranylgeranyl diphosphate with the N-terminal terpene cyclase domain, to yield preterpestacin I. Preterpestacin I is then decorated by oxygenation steps that are catalyzed by two cytochrome P450 monooxygenases. First, FUP2 introduces a hydroxyl group at the C-24 position resulting in the formation of preterpestacin IIa. The second P450 monooxygenase catalyzes the hydroxylation at C-16 and C-17 of preterpestacin IIa, producing preterpestacin III. Subsequently, the FAD-dependent oxidoreductase FUP4 catalyzes the oxidation of the hydroxy group at the C-16 position to a keto group, leading to the formation of (-)-terpestacin, which is the immediate precursor of FUP. The final step in the proposed biosynthetic pathway is the addition of an acetyl group at the C-24 position of terpestacin, which is catalyzed by the acetyltransferase FUP5. The protein is Cytochrome P450 monooxygenase FUP2 of Fusarium proliferatum (strain ET1) (Orchid endophyte fungus).